We begin with the raw amino-acid sequence, 985 residues long: Thioredoxin domain-containing protein 11 (985 aa).

A compositionally biased stretch (gly residues) spans 1-11 (MSECGGRGGGS). The interval 1-38 (MSECGGRGGGSSSSEDAEDEGGGGGGPAGSDCLSSSPT) is disordered. Residues 29–38 (GSDCLSSSPT) show a composition bias toward low complexity. Residues 65 to 85 (LLCGAVALGCALLLALKFTCS) traverse the membrane as a helical segment. Positions 92-214 (IPAKPPVSFF…IEKFVRRVMK (123 aa)) constitute a Thioredoxin 1 domain. 2 cysteine pairs are disulfide-bonded: C469–C472 and C719–C722. Positions 649–799 (LDPKQALMKL…LLRFILHHSD (151 aa)) constitute a Thioredoxin 2 domain. Residues 821–919 (VLQRGHISHL…ASENLLTENT (99 aa)) are a coiled coil. A Phosphoserine modification is found at S828. The disordered stretch occupies residues 935–985 (RDGAESLAAQREVHPKQPEPSATPQLPGSSPPPANVSATLVSERNKENRTD).

It belongs to the protein disulfide isomerase family. In terms of assembly, interacts with the cytoplasmic part of DUOX1 and DUOX2. Interacts with TPO and CYBA. In terms of tissue distribution, widely expressed at low level. Expressed at higher level in thyroid and prostate.

The protein resides in the endoplasmic reticulum membrane. Functionally, may act as a redox regulator involved in DUOX proteins folding. The interaction with DUOX1 and DUOX2 suggest that it belongs to a multiprotein complex constituting the thyroid H(2)O(2) generating system. It is however not sufficient to assist DUOX1 and DUOX2 in H(2)O(2) generation. This chain is Thioredoxin domain-containing protein 11 (TXNDC11), found in Homo sapiens (Human).